Consider the following 442-residue polypeptide: Cyclic adenylate deaminase (442 aa).

It belongs to the metallo-dependent hydrolases superfamily. Adenosine and AMP deaminases family. Zn(2+) is required as a cofactor.

It carries out the reaction 3',5'-cyclic AMP + H2O + H(+) = 3',5'-cyclic IMP + NH4(+). Functionally, deaminates cAMP into cIMP, thereby repressing cAMP dependent metabolism or genes. The sequence is that of Cyclic adenylate deaminase (add) from Leptospira interrogans serogroup Icterohaemorrhagiae serovar copenhageni (strain Fiocruz L1-130).